The chain runs to 937 residues: Isoleucine--tRNA ligase (937 aa).

The 'HIGH' region signature appears at 58-68 (PYANGDIHIGH). Glu561 contacts L-isoleucyl-5'-AMP. The short motif at 602 to 606 (KMSKS) is the 'KMSKS' region element. Residue Lys605 participates in ATP binding. Cys900, Cys903, Cys920, and Cys923 together coordinate Zn(2+).

The protein belongs to the class-I aminoacyl-tRNA synthetase family. IleS type 1 subfamily. Monomer. It depends on Zn(2+) as a cofactor.

Its subcellular location is the cytoplasm. It catalyses the reaction tRNA(Ile) + L-isoleucine + ATP = L-isoleucyl-tRNA(Ile) + AMP + diphosphate. Catalyzes the attachment of isoleucine to tRNA(Ile). As IleRS can inadvertently accommodate and process structurally similar amino acids such as valine, to avoid such errors it has two additional distinct tRNA(Ile)-dependent editing activities. One activity is designated as 'pretransfer' editing and involves the hydrolysis of activated Val-AMP. The other activity is designated 'posttransfer' editing and involves deacylation of mischarged Val-tRNA(Ile). The sequence is that of Isoleucine--tRNA ligase from Alcanivorax borkumensis (strain ATCC 700651 / DSM 11573 / NCIMB 13689 / SK2).